We begin with the raw amino-acid sequence, 30 residues long: LIM and SH3 domain protein 1 (30 aa).

Position 1 is an N-acetylmethionine (Met1). The LIM zinc-binding domain occupies 5 to 30; it reads CARCGKIVYPTEKVNCLDKFWHKACF.

In terms of assembly, interacts with F-actin. Interacts with ANKRD54. Interacts with KBTBD10. Post-translationally, phosphorylated.

It is found in the cytoplasm. The protein resides in the cell cortex. It localises to the cytoskeleton. Plays an important role in the regulation of dynamic actin-based, cytoskeletal activities. Agonist-dependent changes in LASP1 phosphorylation may also serve to regulate actin-associated ion transport activities, not only in the parietal cell but also in certain other F-actin-rich secretory epithelial cell types. This is LIM and SH3 domain protein 1 (LASP1) from Sus scrofa (Pig).